A 398-amino-acid chain; its full sequence is Probable aminomethyltransferase (398 aa).

The protein belongs to the GcvT family. As to quaternary structure, the glycine cleavage system is composed of four proteins: P, T, L and H.

It carries out the reaction N(6)-[(R)-S(8)-aminomethyldihydrolipoyl]-L-lysyl-[protein] + (6S)-5,6,7,8-tetrahydrofolate = N(6)-[(R)-dihydrolipoyl]-L-lysyl-[protein] + (6R)-5,10-methylene-5,6,7,8-tetrahydrofolate + NH4(+). Its function is as follows. The glycine cleavage system catalyzes the degradation of glycine. The polypeptide is Probable aminomethyltransferase (Pyrococcus horikoshii (strain ATCC 700860 / DSM 12428 / JCM 9974 / NBRC 100139 / OT-3)).